A 180-amino-acid polypeptide reads, in one-letter code: ATP synthase subunit delta (180 aa).

This sequence belongs to the ATPase delta chain family. F-type ATPases have 2 components, F(1) - the catalytic core - and F(0) - the membrane proton channel. F(1) has five subunits: alpha(3), beta(3), gamma(1), delta(1), epsilon(1). F(0) has three main subunits: a(1), b(2) and c(10-14). The alpha and beta chains form an alternating ring which encloses part of the gamma chain. F(1) is attached to F(0) by a central stalk formed by the gamma and epsilon chains, while a peripheral stalk is formed by the delta and b chains.

The protein resides in the cell inner membrane. F(1)F(0) ATP synthase produces ATP from ADP in the presence of a proton or sodium gradient. F-type ATPases consist of two structural domains, F(1) containing the extramembraneous catalytic core and F(0) containing the membrane proton channel, linked together by a central stalk and a peripheral stalk. During catalysis, ATP synthesis in the catalytic domain of F(1) is coupled via a rotary mechanism of the central stalk subunits to proton translocation. In terms of biological role, this protein is part of the stalk that links CF(0) to CF(1). It either transmits conformational changes from CF(0) to CF(1) or is implicated in proton conduction. The sequence is that of ATP synthase subunit delta from Parabacteroides distasonis (strain ATCC 8503 / DSM 20701 / CIP 104284 / JCM 5825 / NCTC 11152).